Consider the following 153-residue polypeptide: Transcription antitermination protein NusB (153 aa).

Belongs to the NusB family.

Functionally, involved in transcription antitermination. Required for transcription of ribosomal RNA (rRNA) genes. Binds specifically to the boxA antiterminator sequence of the ribosomal RNA (rrn) operons. The sequence is that of Transcription antitermination protein NusB from Beutenbergia cavernae (strain ATCC BAA-8 / DSM 12333 / CCUG 43141 / JCM 11478 / NBRC 16432 / NCIMB 13614 / HKI 0122).